The following is a 296-amino-acid chain: MGPTASGKTALALELAEKHNCEIISVDSALIYRGMDIGSAKPSAEELARGPHRLIDIRDPAESYSAADFRADALREIEQIISMGKTPVLVGGTMMYFKALLEGLSPLPSADEAIRADIQAEADANGWEALHEQLREIDPVSAERIHPNDPQRLSRAIEVYRISGKSLTELTQTKSAPLPYDVVQFAIAPRERKVLHELIGQRFRIMLEQGFIDEVAQLKARGDLHLDLPSMRCVGYRQCWQYLDGEFDYDTMVEKAVAATRQLAKRQLTWLRSWPELNWLESGAEGNLVTLMRQCR.

Position 2–9 (2–9 (GPTASGKT)) interacts with ATP. A substrate-binding site is contributed by 4–9 (TASGKT). 3 interaction with substrate tRNA regions span residues 27-30 (DSAL), 151-155 (QRLSR), and 232-237 (RCVGYR).

The protein belongs to the IPP transferase family. Monomer. Mg(2+) serves as cofactor.

It catalyses the reaction adenosine(37) in tRNA + dimethylallyl diphosphate = N(6)-dimethylallyladenosine(37) in tRNA + diphosphate. Its function is as follows. Catalyzes the transfer of a dimethylallyl group onto the adenine at position 37 in tRNAs that read codons beginning with uridine, leading to the formation of N6-(dimethylallyl)adenosine (i(6)A). This Shewanella sp. (strain MR-4) protein is tRNA dimethylallyltransferase.